An 83-amino-acid chain; its full sequence is Conotoxin Im22.1 (83 aa).

A signal peptide spans 1–18 (MMMRVFIAMFFLLALVEA). A propeptide spanning residues 19–26 (GWPRLYDK) is cleaved from the precursor.

It belongs to the conotoxin E superfamily. Post-translationally, contain 4 disulfide bonds. In terms of tissue distribution, expressed by the venom duct.

It is found in the secreted. Its function is as follows. Probable neurotoxin. The polypeptide is Conotoxin Im22.1 (Conus imperialis (Imperial cone)).